The chain runs to 65 residues: MFTMKKSLLLLFFLGAINLPLCQEERNAEEERRDGDDEGSVEVQKRFFPLLFGALSSMMPKLFGK.

Residues 1 to 22 (MFTMKKSLLLLFFLGAINLPLC) form the signal peptide. Residues 23–44 (QEERNAEEERRDGDDEGSVEVQ) constitute a propeptide that is removed on maturation. F63 is modified (phenylalanine amide).

As to expression, expressed by the skin glands.

The protein localises to the secreted. In terms of biological role, has antimicrobial activity against Gram-positive bacteria S.aureus ATCC 2592 (MIC=2.5 uM), S.aureus ATCC 43300 (MIC=2.5 uM) and B.subtilis (MIC=15.0 uM), against Gram-negative bacteria E.coli ML-35P (MIC=30.0 uM), P.aeruginosa PA01 (MIC=2.5 uM) and P.aeruginosa ATCC 27853 (MIC=2.5 uM) and against fungus C.albicans ATCC 2002 (MIC=5.0 uM). The sequence is that of Temporin-LK1 from Limnonectes kuhlii (Kuhl's Creek frog).